The sequence spans 335 residues: MTVTPSAATTDGPAAPCAPEDVRRVACVGTGVIGGGWAAHFLARGYDVTAWDPAPDAAVRLRRLIAAAWPALEQLGLAEGASQDRLTVTSTLEEAVADAQFVQESAPEKLDLKRDLLARLDAATPAGTVIASSTSGYPMTDMQTEAADPGRLVVGHPFNPPYLIPLVEVVGGVRTAPAAVDWAARFYAVAGKSVITMEREVPGFIANRLQEALWREALHMVANGEATVAEIDASITEGPGLRWAVMGPMLTFALAGGEGGMAHMLDHFGPSLTSPWTRLEAPELDRALYDAVVAGCEEAADGRSIADLVAERDRGVIDVLRATGRLPRSAEEAAR.

29–34 (GTGVIG) contributes to the NAD(+) binding site.

Belongs to the 3-hydroxyacyl-CoA dehydrogenase family. L-carnitine dehydrogenase subfamily. Homodimer.

The protein localises to the cytoplasm. It catalyses the reaction carnitine + NAD(+) = 3-dehydrocarnitine + NADH + H(+). Its pathway is amine and polyamine metabolism; carnitine metabolism. In terms of biological role, catalyzes the NAD(+)-dependent oxidation of L-carnitine to 3-dehydrocarnitine. The sequence is that of L-carnitine dehydrogenase from Streptomyces griseus subsp. griseus (strain JCM 4626 / CBS 651.72 / NBRC 13350 / KCC S-0626 / ISP 5235).